A 276-amino-acid polypeptide reads, in one-letter code: Undecaprenyl-diphosphatase (276 aa).

A run of 6 helical transmembrane segments spans residues 43-63, 85-105, 109-129, 183-203, 214-234, and 249-269; these read RAMA…VWEF, ANLL…ADLI, LFNP…MLWA, AATE…AVYS, SDLP…MIAV, and FAWY…FGWV.

It belongs to the UppP family.

It is found in the cell inner membrane. The enzyme catalyses di-trans,octa-cis-undecaprenyl diphosphate + H2O = di-trans,octa-cis-undecaprenyl phosphate + phosphate + H(+). In terms of biological role, catalyzes the dephosphorylation of undecaprenyl diphosphate (UPP). Confers resistance to bacitracin. The polypeptide is Undecaprenyl-diphosphatase (Pseudomonas putida (strain W619)).